The following is a 2003-amino-acid chain: Histone acetyltransferase KAT6A (2003 aa).

An SAMD1-like winged helix (WH) domain is found at 1 to 77; the sequence is MVKLANPLYT…LNSYKDPDNP (77 aa). The tract at residues 1-144 is required for activation of RUNX1-1; sequence MVKLANPLYT…CGGSAAPGFH (144 aa). Positions 52 to 166 are required for nuclear localization; it reads ELSVKDGTIL…HGRLLKDGPL (115 aa). Residues 95 to 171 enclose the H15 domain; the sequence is QSVDWNKLLK…KDGPLYRLNT (77 aa). The segment at 144–663 is interaction with PML; the sequence is HQQLRLAIKR…RKGYGRFLID (520 aa). Lys-172 carries the post-translational modification N6-acetyllysine. PHD-type zinc fingers lie at residues 206–265 and 262–313; these read IPIC…CKTC and CKTC…CRPR. The interaction with RUNX1-1 stretch occupies residues 312 to 663; sequence PRKKGRKLLQ…RKGYGRFLID (352 aa). A disordered region spans residues 336–377; it reads GRPKNRLKKQNTVSKGPFSKVRTGPGRGRKRKITVSSQSASS. 2 positions are modified to N6-acetyllysine: Lys-350 and Lys-355. At Thr-369 the chain carries Phosphothreonine; by PKB/AKT1. The residue at position 419 (Ser-419) is a Phosphoserine. The segment at 439 to 466 is disordered; that stretch reads RKKGNRKSSTSDWPTDNQDGWESKQENE. The span at 445-458 shows a compositional bias: polar residues; it reads KSSTSDWPTDNQDG. Position 472 is a phosphoserine (Ser-472). Positions 487-777 are catalytic; the sequence is IQEQALQKVG…VDPECLRWTP (291 aa). The region spanning 503-777 is the MYST-type HAT domain; sequence PQVRCPSVIE…VDPECLRWTP (275 aa). Residues 506-809 form a mediates interaction with BRPF1, required for histone H3 acetyltransferase activity region; the sequence is RCPSVIEFGK…EPQGQERELE (304 aa). Residues 536-561 form a C2HC MYST-type zinc finger; it reads LYLCEFCLKYMKSRTILQQHMKKCGW. Position 603 is an N6-acetyllysine; by autocatalysis (Lys-603). Acetyl-CoA contacts are provided by residues 644–648 and 653–659; these read SCIMI and QRKGYGR. Glu-679 serves as the catalytic Proton donor/acceptor. Ser-683 contributes to the acetyl-CoA binding site. Residues 784–939 are disordered; the sequence is VVSEDEDEEA…DGKPDIPKGR (156 aa). Ser-786 is modified (phosphoserine). Positions 786–798 are enriched in acidic residues; sequence SEDEDEEADEGEK. Residues 799–841 show a composition bias toward basic and acidic residues; that stretch reads EEPQGQERELETRVKVGKSVSREKKDQESSSLIETDKKPEVKE. N6-acetyllysine occurs at positions 813 and 816. A Glycyl lysine isopeptide (Lys-Gly) (interchain with G-Cter in SUMO2) cross-link involves residue Lys-836. Basic residues predominate over residues 866–875; it reads RRGRCGRKNR. The segment covering 876–890 has biased composition (basic and acidic residues); the sequence is KTQERFGDKDSKMLV. A Phosphotyrosine modification is found at Tyr-901. Basic and acidic residues predominate over residues 904-917; that stretch reads CEEKSETSQERFTE. Phosphoserine occurs at positions 941 and 954. Residues 983–1083 are disordered; it reads GFSESSEEEE…EEEESELFPR (101 aa). Lys-1007 carries the post-translational modification N6-acetyllysine. Over residues 1009-1030 the composition is skewed to basic residues; sequence TLKRKKPILHRRRRVRKRKHHN. The span at 1031 to 1042 shows a compositional bias: low complexity; that stretch reads SSVVTETISETT. Composition is skewed to acidic residues over residues 1043–1053 and 1065–1079; these read EVLDEPFEDSD and FEME…EESE. Phosphoserine is present on residues Ser-1090, Ser-1091, and Ser-1115. Disordered regions lie at residues 1096-1174, 1197-1438, 1455-1533, 1546-1568, and 1631-1707; these read RCQS…RKPG, IKPG…GAYQ, HTDE…PSVS, DLGS…STMG, and TCVV…CSMN. Residues 1107-1120 are compositionally biased toward acidic residues; sequence EEEEEEEESDDADD. The segment covering 1136 to 1147 has biased composition (polar residues); the sequence is NSASLEPDTSTP. A compositionally biased stretch (basic residues) spans 1148 to 1174; that stretch reads MKKKKGWPKGKSRKPIHWKKRPGRKPG. Residues 1204-1229 are compositionally biased toward basic and acidic residues; the sequence is RTQENEEIVEVKEDLLEERKEEMHTE. 2 stretches are compositionally biased toward acidic residues: residues 1230–1241 and 1282–1299; these read PDEEAEEEEDTT and EEPQ…DEVT. Residues 1317 to 1334 are compositionally biased toward basic and acidic residues; the sequence is HLDSLKTKEPEEQPARED. Lys-1336 participates in a covalent cross-link: Glycyl lysine isopeptide (Lys-Gly) (interchain with G-Cter in SUMO2). Basic and acidic residues-rich tracts occupy residues 1352 to 1361 and 1393 to 1414; these read DSRENTKDKD and DSNT…HSEL. The segment covering 1473–1490 has biased composition (low complexity); it reads HNSPISSIPSHPSQSVRS. Composition is skewed to polar residues over residues 1502–1523 and 1550–1568; these read GYTQ…NMET and IEST…STMG. Positions 1511–1636 are interaction with RUNX1-2; sequence GSLSAPSMQN…KSPQTCVVER (126 aa). The tract at residues 1511–1740 is interaction with PML; that stretch reads GSLSAPSMQN…YERIPGDFGA (230 aa). Composition is skewed to pro residues over residues 1640 to 1673 and 1682 to 1698; these read NQQP…PPQP and QPPP…PQQQ. The required for activation of RUNX1-2 stretch occupies residues 1912-1947; sequence SMNMNTLNAMNSYRMTQPMMNSSYHSNPAYMNQTAQ.

The protein belongs to the MYST (SAS/MOZ) family. As to quaternary structure, component of the MOZ/MORF complex composed at least of ING5, KAT6A, KAT6B, MEAF6 and one of BRPF1, BRD1/BRPF2 and BRPF3. Interacts with RUNX2. Interacts with RUNX1; phosphorylation of RUNX1 enhances the interaction. Interacts with p53/TP53. Interacts with PML and this interaction positively regulates its acetylation activity towards p53/TP53. Autoacetylated. Autoacetylation at Lys-603 is required for proper function. In terms of processing, phosphorylation at Thr-369 by PKB/AKT1 inhibits its interaction with PML and negatively regulates its acetylation activity towards p53/TP53.

Its subcellular location is the nucleus. The protein localises to the nucleolus. It localises to the nucleoplasm. The protein resides in the PML body. The enzyme catalyses L-lysyl-[protein] + acetyl-CoA = N(6)-acetyl-L-lysyl-[protein] + CoA + H(+). In terms of biological role, histone acetyltransferase that acetylates lysine residues in histone H3 and histone H4 (in vitro). Component of the MOZ/MORF complex which has a histone H3 acetyltransferase activity. May act as a transcriptional coactivator for RUNX1 and RUNX2. Acetylates p53/TP53 at 'Lys-120' and 'Lys-382' and controls its transcriptional activity via association with PML. The sequence is that of Histone acetyltransferase KAT6A (Kat6a) from Mus musculus (Mouse).